We begin with the raw amino-acid sequence, 430 residues long: N-lysine methyltransferase SMYD2-B (430 aa).

The SET domain maps to 5-239 (EGLERFDSPG…AGEEVFTSYI (235 aa)). 15-17 (KGR) is a binding site for S-adenosyl-L-methionine. The Zn(2+) site is built by C50, C53, C63, C66, C72, C76, H84, and C88. An MYND-type zinc finger spans residues 50 to 88 (CDFCFTRKEGLSKCGKCKQAFYCNVDCQKGDWPMHKLEC). Residues H135, 204–205 (NH), and 256–258 (YFF) contribute to the S-adenosyl-L-methionine site.

The protein belongs to the class V-like SAM-binding methyltransferase superfamily.

The protein resides in the cytoplasm. Its subcellular location is the cytosol. It is found in the nucleus. The catalysed reaction is L-lysyl(4)-[histone H3] + 3 S-adenosyl-L-methionine = N(6),N(6),N(6)-trimethyl-L-lysyl(4)-[histone H3] + 3 S-adenosyl-L-homocysteine + 3 H(+). The enzyme catalyses L-lysyl-[protein] + S-adenosyl-L-methionine = N(6)-methyl-L-lysyl-[protein] + S-adenosyl-L-homocysteine + H(+). Protein-lysine N-methyltransferase that methylates both histones and non-histone proteins, including p53/TP53 and RB1. Specifically trimethylates histone H3 'Lys-4' (H3K4me3) in vivo. The activity requires interaction with HSP90alpha. Shows even higher methyltransferase activity on p53/TP53. Monomethylates 'Lys-370' of p53/TP53, leading to decreased DNA-binding activity and subsequent transcriptional regulation activity of p53/TP53. Monomethylates RB1 at 'Lys-860'. The sequence is that of N-lysine methyltransferase SMYD2-B (smyd2-b) from Xenopus laevis (African clawed frog).